The primary structure comprises 64 residues: Potassium channel toxin kappa-KTx 3.1 (64 aa).

The N-terminal stretch at 1–26 is a signal peptide; that stretch reads MKSTLMTASVLILVLLSIVDYASVYA. A propeptide spanning residues 27 to 36 is cleaved from the precursor; that stretch reads EFIDSEISLE. Disulfide bonds link C43–C61 and C47–C57.

Belongs to the short scorpion toxin superfamily. Potassium channel inhibitor kappa-KTx family. Kappa-KTx 3 subfamily. Expressed by the venom gland.

The protein resides in the secreted. Its function is as follows. Potassium channel inhibitor (Kv). The protein is Potassium channel toxin kappa-KTx 3.1 of Heterometrus petersii (Asian forest scorpion).